Here is a 128-residue protein sequence, read N- to C-terminus: Small ribosomal subunit protein uS11 (128 aa).

This sequence belongs to the universal ribosomal protein uS11 family. In terms of assembly, part of the 30S ribosomal subunit. Interacts with proteins S7 and S18. Binds to IF-3.

Located on the platform of the 30S subunit, it bridges several disparate RNA helices of the 16S rRNA. Forms part of the Shine-Dalgarno cleft in the 70S ribosome. This chain is Small ribosomal subunit protein uS11, found in Synechococcus sp. (strain JA-3-3Ab) (Cyanobacteria bacterium Yellowstone A-Prime).